The following is a 297-amino-acid chain: N-acetylmuramic acid 6-phosphate etherase (297 aa).

The SIS domain occupies 55–218 (AAAALKAGGR…STGAMVKLGK (164 aa)). Residue Glu83 is the Proton donor of the active site. Glu114 is an active-site residue.

The protein belongs to the GCKR-like family. MurNAc-6-P etherase subfamily. In terms of assembly, homodimer.

The catalysed reaction is N-acetyl-D-muramate 6-phosphate + H2O = N-acetyl-D-glucosamine 6-phosphate + (R)-lactate. It participates in amino-sugar metabolism; 1,6-anhydro-N-acetylmuramate degradation. The protein operates within amino-sugar metabolism; N-acetylmuramate degradation. It functions in the pathway cell wall biogenesis; peptidoglycan recycling. Specifically catalyzes the cleavage of the D-lactyl ether substituent of MurNAc 6-phosphate, producing GlcNAc 6-phosphate and D-lactate. Together with AnmK, is also required for the utilization of anhydro-N-acetylmuramic acid (anhMurNAc) either imported from the medium or derived from its own cell wall murein, and thus plays a role in cell wall recycling. The protein is N-acetylmuramic acid 6-phosphate etherase of Serratia proteamaculans (strain 568).